A 297-amino-acid polypeptide reads, in one-letter code: UDP-3-O-acyl-N-acetylglucosamine deacetylase (297 aa).

3 residues coordinate Zn(2+): His77, His236, and Asp240. His263 functions as the Proton donor in the catalytic mechanism.

The protein belongs to the LpxC family. Zn(2+) is required as a cofactor.

It carries out the reaction a UDP-3-O-[(3R)-3-hydroxyacyl]-N-acetyl-alpha-D-glucosamine + H2O = a UDP-3-O-[(3R)-3-hydroxyacyl]-alpha-D-glucosamine + acetate. It participates in glycolipid biosynthesis; lipid IV(A) biosynthesis; lipid IV(A) from (3R)-3-hydroxytetradecanoyl-[acyl-carrier-protein] and UDP-N-acetyl-alpha-D-glucosamine: step 2/6. Catalyzes the hydrolysis of UDP-3-O-myristoyl-N-acetylglucosamine to form UDP-3-O-myristoylglucosamine and acetate, the committed step in lipid A biosynthesis. The sequence is that of UDP-3-O-acyl-N-acetylglucosamine deacetylase from Psychrobacter sp. (strain PRwf-1).